The chain runs to 193 residues: Pyridoxal 5'-phosphate synthase subunit PdxT (193 aa).

Position 48 to 50 (48 to 50) interacts with L-glutamine; sequence GES. Cys-80 acts as the Nucleophile in catalysis. L-glutamine-binding positions include Arg-107 and 136-137; that span reads IR. Residues His-172 and Glu-174 each act as charge relay system in the active site.

This sequence belongs to the glutaminase PdxT/SNO family. In the presence of PdxS, forms a dodecamer of heterodimers. Only shows activity in the heterodimer.

The enzyme catalyses aldehydo-D-ribose 5-phosphate + D-glyceraldehyde 3-phosphate + L-glutamine = pyridoxal 5'-phosphate + L-glutamate + phosphate + 3 H2O + H(+). It catalyses the reaction L-glutamine + H2O = L-glutamate + NH4(+). It functions in the pathway cofactor biosynthesis; pyridoxal 5'-phosphate biosynthesis. In terms of biological role, catalyzes the hydrolysis of glutamine to glutamate and ammonia as part of the biosynthesis of pyridoxal 5'-phosphate. The resulting ammonia molecule is channeled to the active site of PdxS. The polypeptide is Pyridoxal 5'-phosphate synthase subunit PdxT (Clostridium botulinum (strain Loch Maree / Type A3)).